The primary structure comprises 123 residues: Large ribosomal subunit protein uL14 (123 aa).

This sequence belongs to the universal ribosomal protein uL14 family. In terms of assembly, part of the 50S ribosomal subunit. Forms a cluster with proteins L3 and L19. In the 70S ribosome, L14 and L19 interact and together make contacts with the 16S rRNA in bridges B5 and B8.

Binds to 23S rRNA. Forms part of two intersubunit bridges in the 70S ribosome. The chain is Large ribosomal subunit protein uL14 from Actinobacillus pleuropneumoniae serotype 7 (strain AP76).